The chain runs to 340 residues: MANQQIGGSTVTYNGAIPMGGPVAINSVIEIAGTEVLVDLKLDYATGKISGVQTLYIDLRDFLGDVTVTMPDTGQRITARAGTQGYYPVLSTNLMKFIVSATIDGKFPMNFINFPIALGVWPSGIKGDKGDPGAPGPAGGTVVVEDSGASFGESLLDTTSEPGKILVKRISGGSGITVTDYGDQVEIEASGGGGGGGGVTDALSLMYSTSTGGPASIAANALTDFDLSGALTVNSVGTGLTKSAAGIQLAAGKSGLYQITMTVKNNTVTTGNYLLRVKYGSSDFVVACPASSLTAGGTISLLIYCNVLGVPSLDVLKFSLCNDGAALSNYIINITAAKIN.

A domain-1 region spans residues 2–122 (ANQQIGGSTV…NFPIALGVWP (121 aa)). In terms of domain architecture, Collagen-like spans 123 to 141 (SGIKGDKGDPGAPGPAGGT). Positions 142–340 (VVVEDSGASF…IINITAAKIN (199 aa)) are domain-2.

Homotrimer.

It is found in the virion. Its function is as follows. In association with P31 and P2, forms the spike complexes located at the 5-fold vertices of the capsid. Essential for viral infectivity. The sequence is that of Spike protein P5 (V) from Enterobacteria phage PRD1 (Bacteriophage PRD1).